A 267-amino-acid polypeptide reads, in one-letter code: Eukaryotic translation initiation factor 3 subunit K (267 aa).

The 188-residue stretch at Phe-46 to Arg-233 folds into the PCI domain.

Belongs to the eIF-3 subunit K family. In terms of assembly, component of the eukaryotic translation initiation factor 3 (eIF-3) complex.

The protein localises to the cytoplasm. Its function is as follows. Component of the eukaryotic translation initiation factor 3 (eIF-3) complex, which is involved in protein synthesis of a specialized repertoire of mRNAs and, together with other initiation factors, stimulates binding of mRNA and methionyl-tRNAi to the 40S ribosome. The eIF-3 complex specifically targets and initiates translation of a subset of mRNAs involved in cell proliferation. The chain is Eukaryotic translation initiation factor 3 subunit K from Aspergillus niger (strain ATCC MYA-4892 / CBS 513.88 / FGSC A1513).